A 115-amino-acid polypeptide reads, in one-letter code: Large ribosomal subunit protein uL24 (115 aa).

The protein belongs to the universal ribosomal protein uL24 family. As to quaternary structure, part of the 50S ribosomal subunit.

One of two assembly initiator proteins, it binds directly to the 5'-end of the 23S rRNA, where it nucleates assembly of the 50S subunit. Functionally, one of the proteins that surrounds the polypeptide exit tunnel on the outside of the subunit. The sequence is that of Large ribosomal subunit protein uL24 from Phytoplasma mali (strain AT).